A 377-amino-acid chain; its full sequence is F-box protein At1g11810 (377 aa).

The 47-residue stretch at 2 to 48 folds into the F-box domain; the sequence is TTTMSTLPVVLVDEILARVPITSLRSLRSTCKKWEASSKTNLVGGKA.

This is F-box protein At1g11810 from Arabidopsis thaliana (Mouse-ear cress).